The following is a 364-amino-acid chain: tRNA-specific 2-thiouridylase MnmA 2 (364 aa).

ATP is bound by residues glycine 10–serine 17 and methionine 36. Catalysis depends on cysteine 106, which acts as the Nucleophile. Cysteine 106 and cysteine 204 are joined by a disulfide. Glycine 130 serves as a coordination point for ATP. Residues lysine 154–glutamine 156 form an interaction with tRNA region. Cysteine 204 serves as the catalytic Cysteine persulfide intermediate. Residues arginine 310–tyrosine 311 are interaction with tRNA.

It belongs to the MnmA/TRMU family.

It localises to the cytoplasm. The catalysed reaction is S-sulfanyl-L-cysteinyl-[protein] + uridine(34) in tRNA + AH2 + ATP = 2-thiouridine(34) in tRNA + L-cysteinyl-[protein] + A + AMP + diphosphate + H(+). Functionally, catalyzes the 2-thiolation of uridine at the wobble position (U34) of tRNA, leading to the formation of s(2)U34. This is tRNA-specific 2-thiouridylase MnmA 2 from Caldanaerobacter subterraneus subsp. tengcongensis (strain DSM 15242 / JCM 11007 / NBRC 100824 / MB4) (Thermoanaerobacter tengcongensis).